A 253-amino-acid chain; its full sequence is MSFVVVIPARYASTRLPGKPLADIHGKPMVQHVVEKALQSGADRVIVATDDERVQQALAACAGQAGFEVCMTSKDHQSGTERLAEVCRHYGFAADTIVVNVQGDEPLIPPVIIRQVADNLAAATAPMATLSVPIQDAEEVFNPNAVKVVTDQEGYALYFSRASIPWDRDRFAASREQIGDHYQRHIGIYAYRAGFIQRYVDWAPSALEQIEALEQLRVLWYGEKIHVAQALEAPPVGVDTQADLDKVRALLAN.

It belongs to the KdsB family.

It is found in the cytoplasm. It catalyses the reaction 3-deoxy-alpha-D-manno-oct-2-ulosonate + CTP = CMP-3-deoxy-beta-D-manno-octulosonate + diphosphate. It functions in the pathway nucleotide-sugar biosynthesis; CMP-3-deoxy-D-manno-octulosonate biosynthesis; CMP-3-deoxy-D-manno-octulosonate from 3-deoxy-D-manno-octulosonate and CTP: step 1/1. It participates in bacterial outer membrane biogenesis; lipopolysaccharide biosynthesis. Functionally, activates KDO (a required 8-carbon sugar) for incorporation into bacterial lipopolysaccharide in Gram-negative bacteria. This is 3-deoxy-manno-octulosonate cytidylyltransferase from Aeromonas hydrophila subsp. hydrophila (strain ATCC 7966 / DSM 30187 / BCRC 13018 / CCUG 14551 / JCM 1027 / KCTC 2358 / NCIMB 9240 / NCTC 8049).